Here is a 146-residue protein sequence, read N- to C-terminus: MARNVLYPLYQLGGPQLRVFRTNFFIQLVRPGTAQPEDTVQFRIPMEMTRVDLRNYLEQIYNVPVAAVRTRVQHGSNRRRDHKNVRIKKPDYKVAYVQLAHGQTFTFPDLFPEKDPRSPEPLEEELPQQRQSSDLRCPGIPSWFGL.

The segment at 108-138 (PDLFPEKDPRSPEPLEEELPQQRQSSDLRCP) is disordered. Residues 111–120 (FPEKDPRSPE) show a composition bias toward basic and acidic residues.

Belongs to the universal ribosomal protein uL23 family. Component of the mitochondrial ribosome large subunit (39S) which comprises a 16S rRNA and about 50 distinct proteins.

Its subcellular location is the mitochondrion. This Mus musculus (Mouse) protein is Large ribosomal subunit protein uL23m (Mrpl23).